The primary structure comprises 82 residues: RNA-binding protein Hfq (82 aa).

The Sm domain occupies 11 to 71 (DTFLNHVRKT…ISTIMPGAPI (61 aa)).

It belongs to the Hfq family. In terms of assembly, homohexamer.

Functionally, RNA chaperone that binds small regulatory RNA (sRNAs) and mRNAs to facilitate mRNA translational regulation in response to envelope stress, environmental stress and changes in metabolite concentrations. Also binds with high specificity to tRNAs. The sequence is that of RNA-binding protein Hfq from Bradyrhizobium diazoefficiens (strain JCM 10833 / BCRC 13528 / IAM 13628 / NBRC 14792 / USDA 110).